A 296-amino-acid chain; its full sequence is Ribosomal protein L11 methyltransferase (296 aa).

S-adenosyl-L-methionine contacts are provided by T139, G163, D185, and N232.

This sequence belongs to the methyltransferase superfamily. PrmA family.

Its subcellular location is the cytoplasm. The enzyme catalyses L-lysyl-[protein] + 3 S-adenosyl-L-methionine = N(6),N(6),N(6)-trimethyl-L-lysyl-[protein] + 3 S-adenosyl-L-homocysteine + 3 H(+). Its function is as follows. Methylates ribosomal protein L11. This Rippkaea orientalis (strain PCC 8801 / RF-1) (Cyanothece sp. (strain PCC 8801)) protein is Ribosomal protein L11 methyltransferase.